An 829-amino-acid polypeptide reads, in one-letter code: Receptor-type tyrosine-protein phosphatase alpha (829 aa).

Positions Met-1–Ala-19 are cleaved as a signal peptide. At Asn-20–Pro-142 the chain is on the extracellular side. Asn-21, Asn-47, Asn-51, Asn-68, Asn-80, Asn-86, Asn-104, and Asn-124 each carry an N-linked (GlcNAc...) asparagine glycan. Residues Val-79–Ser-106 are disordered. A helical membrane pass occupies residues Ile-143–Leu-166. The Cytoplasmic segment spans residues Arg-167–Lys-829. A phosphoserine mark is found at Ser-202 and Ser-204. 2 Tyrosine-protein phosphatase domains span residues Phe-232 to His-528 and Leu-560 to Tyr-818. Residues Asp-437, Cys-469 to Arg-475, and Gln-513 contribute to the substrate site. Catalysis depends on Cys-469, which acts as the Phosphocysteine intermediate. Cys-759 acts as the Phosphocysteine intermediate in catalysis. Position 825 is a phosphotyrosine (Tyr-825).

It belongs to the protein-tyrosine phosphatase family. Receptor class 4 subfamily. In terms of assembly, part of a complex comprised of PTPRA, BCAR1, BCAR3 (via SH2 domain), and SRC. Within the complex, interacts (when phosphorylated on Tyr-825) with BCAR3 (via SH2 domain). Interacts with GRB2. Integrin binding to extracellular matrix induces phosphorylation at Tyr-825 which induces PTPRA localization and recruitment of BCAR3, BCAR1 and CRK to focal adhesions. Widely expressed. Highest expression in brain and kidney.

It localises to the cell membrane. Its subcellular location is the cell junction. The protein localises to the focal adhesion. The catalysed reaction is O-phospho-L-tyrosyl-[protein] + H2O = L-tyrosyl-[protein] + phosphate. Functionally, tyrosine protein phosphatase which is involved in integrin-mediated focal adhesion formation. Following integrin engagement, specifically recruits BCAR3, BCAR1 and CRK to focal adhesions thereby promoting SRC-mediated phosphorylation of BRAC1 and the subsequent activation of PAK and small GTPase RAC1 and CDC42. In Mus musculus (Mouse), this protein is Receptor-type tyrosine-protein phosphatase alpha (Ptpra).